The sequence spans 518 residues: Sensor protein kinase HptS (518 aa).

2 helical membrane-spanning segments follow: residues 20-40 (IFPV…IYIW) and 222-242 (GITL…FGFI). Positions 297–513 (EQLIHSIEHT…LICYKIPLSR (217 aa)) constitute a Histidine kinase domain. H325 is modified (phosphohistidine; by autocatalysis).

Post-translationally, autophosphorylated.

The protein localises to the cell membrane. The enzyme catalyses ATP + protein L-histidine = ADP + protein N-phospho-L-histidine.. In terms of biological role, member of the two-component regulatory system HptS/HptR that regulates genes involved in hexose phosphate transport system in response to changes in extracellular phosphate sources. May act as a sensor protein kinase which is autophosphorylated at a histidine residue and transfers its phosphate group to the conserved aspartic acid residue in the regulatory domain of HptS. In turn, HptS antagonizes CcpA-dependent transcription of a subset of CcpA-regulated genes involved in antibiotic susceptibility. This chain is Sensor protein kinase HptS (hptS), found in Staphylococcus aureus (strain MSSA476).